Here is a 350-residue protein sequence, read N- to C-terminus: DNA repair protein RAD51 homolog 2 (350 aa).

Residues 1–75 are interaction with RAD51C; that stretch reads MSSKKLRRVG…TAYELKTRRS (75 aa). Residue 108–115 participates in ATP binding; sequence GPPGCGKT.

The protein belongs to the RecA family. RAD51 subfamily. In terms of assembly, part of the BCDX2 complex consisting of RAD51B, RAD51C, RAD51D and XRCC2; the complex has a ring-like structure arranged into a flat disc around a central channel. The BCDX2 subcomplex RAD51B:RAD51C interacts with RAD51. Interacts with SWSAP1; involved in homologous recombination repair. Interacts with HELQ. Post-translationally, phosphorylated on tyrosine residues by BCR-ABL. In terms of tissue distribution, expressed in a wide range of tissues.

The protein resides in the nucleus. Involved in the homologous recombination repair (HRR) pathway of double-stranded DNA breaks arising during DNA replication or induced by DNA-damaging agents. May promote the assembly of presynaptic RAD51 nucleoprotein filaments. Binds single-stranded DNA and double-stranded DNA and has DNA-dependent ATPase activity. Part of the RAD51 paralog protein complex BCDX2 which acts in the BRCA1-BRCA2-dependent HR pathway. Upon DNA damage, BCDX2 acts downstream of BRCA2 recruitment and upstream of RAD51 recruitment. BCDX2 binds predominantly to the intersection of the four duplex arms of the Holliday junction and to junction of replication forks. The BCDX2 complex was originally reported to bind single-stranded DNA, single-stranded gaps in duplex DNA and specifically to nicks in duplex DNA. The BCDX2 subcomplex RAD51B:RAD51C exhibits single-stranded DNA-dependent ATPase activity suggesting an involvement in early stages of the HR pathway. The protein is DNA repair protein RAD51 homolog 2 (Rad51b) of Mus musculus (Mouse).